We begin with the raw amino-acid sequence, 987 residues long: Valine--tRNA ligase (987 aa).

A 'HIGH' region motif is present at residues 45–55 (PNVTGSLHMGH). A 'KMSKS' region motif is present at residues 634 to 638 (KMSKS). Lys-637 is an ATP binding site. Positions 917 to 985 (VIDIGAEKAR…LSAALARLSE (69 aa)) form a coiled coil.

The protein belongs to the class-I aminoacyl-tRNA synthetase family. ValS type 1 subfamily. Monomer.

The protein resides in the cytoplasm. The catalysed reaction is tRNA(Val) + L-valine + ATP = L-valyl-tRNA(Val) + AMP + diphosphate. Functionally, catalyzes the attachment of valine to tRNA(Val). As ValRS can inadvertently accommodate and process structurally similar amino acids such as threonine, to avoid such errors, it has a 'posttransfer' editing activity that hydrolyzes mischarged Thr-tRNA(Val) in a tRNA-dependent manner. The polypeptide is Valine--tRNA ligase (Cereibacter sphaeroides (strain ATCC 17023 / DSM 158 / JCM 6121 / CCUG 31486 / LMG 2827 / NBRC 12203 / NCIMB 8253 / ATH 2.4.1.) (Rhodobacter sphaeroides)).